A 211-amino-acid polypeptide reads, in one-letter code: tRNA (guanine-N(7)-)-methyltransferase (211 aa).

The S-adenosyl-L-methionine site is built by glutamate 43, glutamate 68, asparagine 95, and aspartate 117. The active site involves aspartate 117. Substrate is bound by residues lysine 121, aspartate 153, and 190 to 193 (TEYE).

It belongs to the class I-like SAM-binding methyltransferase superfamily. TrmB family.

The catalysed reaction is guanosine(46) in tRNA + S-adenosyl-L-methionine = N(7)-methylguanosine(46) in tRNA + S-adenosyl-L-homocysteine. Its pathway is tRNA modification; N(7)-methylguanine-tRNA biosynthesis. Its function is as follows. Catalyzes the formation of N(7)-methylguanine at position 46 (m7G46) in tRNA. The chain is tRNA (guanine-N(7)-)-methyltransferase from Alkaliphilus oremlandii (strain OhILAs) (Clostridium oremlandii (strain OhILAs)).